Reading from the N-terminus, the 297-residue chain is MLPQEIVYTKLSSTETQNGWIDFLTTKPLASQGIEWTPLIPTAHVLSIFMVLFMIAILTAVYYTKLKKLKPTEPPTGYVLVVQLLILQFENLTVDLLGEKNRRLSLLFIIIFVYILISNLMSMVGGIAAPTSSSTVTFSLGLMSFFGTFIMGVKYQKLAYFRDFFVIIKIKKKTIPLMINPLNVIGYFAPLLSISLRLWGNVLAGSIFIALLYSLFRTFFTLWSPSSFSVGLVFGTLAGGLVIPAFHVYFDILVSAIQAFVFVSLMLTYWSQPIKAAENAAEEKGQQMIENQRLNVK.

The next 8 membrane-spanning stretches (helical) occupy residues 38–58, 77–97, 107–127, 133–153, 174–194, 202–222, 230–250, and 252–272; these read PLIPTAHVLSIFMVLFMIAIL, GYVLVVQLLILQFENLTVDLL, LFIIIFVYILISNLMSMVGGI, SSTVTFSLGLMSFFGTFIMGV, TIPLMINPLNVIGYFAPLLSI, VLAGSIFIALLYSLFRTFFTL, VGLVFGTLAGGLVIPAFHVYF, and ILVSAIQAFVFVSLMLTYWSQ.

It belongs to the ATPase A chain family. F-type ATPases have 2 components, CF(1) - the catalytic core - and CF(0) - the membrane proton channel. CF(1) has five subunits: alpha(3), beta(3), gamma(1), delta(1), epsilon(1). CF(0) has three main subunits: a(1), b(2) and c(9-12). The alpha and beta chains form an alternating ring which encloses part of the gamma chain. CF(1) is attached to CF(0) by a central stalk formed by the gamma and epsilon chains, while a peripheral stalk is formed by the delta and b chains.

It localises to the cell membrane. In terms of biological role, key component of the proton channel; it plays a direct role in the translocation of protons across the membrane. The chain is ATP synthase subunit a from Mycoplasmoides gallisepticum (strain R(low / passage 15 / clone 2)) (Mycoplasma gallisepticum).